A 333-amino-acid chain; its full sequence is MFARDIGIDLGTANVLIHVKGKGIVLNEPSVVALDKNSGKVLAVGEEARRMVGRTPGNIVAIRPLKDGVIADFEVTEAMLKHFINKLNVKGLFSKPRMLICCPTNITSVEQKAIKEAAEKSGGKHVYLEEEPKVAAIGAGMEIFQPSGNMVVDIGGGTTDIAVISMGDIVTSSSIKMAGDKFDMEILNYIKREYKLLIGERTAEDIKIKVATVFPDARHEEISIRGRDMVSGLPRTITVNSKEVEEALRESVAVIVQAAKQVLERTPPELSADIIDRGVIITGGGALLNGLDQLLAEELKVPVLVAENPMDCVAIGTGVMLDNMDKLPKRKLS.

ATP contacts are provided by residues 12–14, 156–158, 204–207, and 284–287; these read TAN, GGT, EDIK, and GGAL.

The protein belongs to the FtsA/MreB family. In terms of assembly, forms polymers. Forms a complex with MreB and MreBH. Interacts with MreC.

Its subcellular location is the cytoplasm. Its function is as follows. Forms membrane-associated dynamic filaments that are essential for cell shape determination. Acts by regulating cell wall synthesis and cell elongation, and thus cell shape. A feedback loop between cell geometry and Mbl localization may maintain elongated cell shape by targeting cell wall growth to regions of negative cell wall curvature. Filaments rotate around the cell circumference in concert with the cell wall synthesis enzymes. The process is driven by the cell wall synthesis machinery and does not depend on Mbl polymerization. Organizes peptidoglycan synthesis in the lateral cell wall. Also required for proper chromosome segregation. The chain is Cell shape-determining protein Mbl (mbl) from Bacillus subtilis (strain 168).